The sequence spans 85 residues: Cytochrome c6 (85 aa).

Heme c contacts are provided by Cys14, Cys17, His18, and Met58.

This sequence belongs to the cytochrome c family. PetJ subfamily. As to quaternary structure, monomer. Post-translationally, binds 1 heme c group covalently per subunit.

The protein localises to the plastid. The protein resides in the chloroplast thylakoid lumen. Its function is as follows. Functions as an electron carrier between membrane-bound cytochrome b6-f and photosystem I in oxygenic photosynthesis. The protein is Cytochrome c6 (petJ) of Petalonia fascia (False kelp).